The primary structure comprises 77 residues: Translation initiation factor IF-1, chloroplastic (77 aa).

The S1-like domain occupies 1-71; that stretch reads MKEQKLIHEG…TRGRIIYRLR (71 aa).

This sequence belongs to the IF-1 family. As to quaternary structure, component of the 30S ribosomal translation pre-initiation complex which assembles on the 30S ribosome in the order IF-2 and IF-3, IF-1 and N-formylmethionyl-tRNA(fMet); mRNA recruitment can occur at any time during PIC assembly.

The protein resides in the plastid. The protein localises to the chloroplast. One of the essential components for the initiation of protein synthesis. Stabilizes the binding of IF-2 and IF-3 on the 30S subunit to which N-formylmethionyl-tRNA(fMet) subsequently binds. Helps modulate mRNA selection, yielding the 30S pre-initiation complex (PIC). Upon addition of the 50S ribosomal subunit IF-1, IF-2 and IF-3 are released leaving the mature 70S translation initiation complex. This Ceratophyllum demersum (Rigid hornwort) protein is Translation initiation factor IF-1, chloroplastic.